Consider the following 107-residue polypeptide: RecQ-mediated genome instability protein 2 homolog (107 aa).

It belongs to the RMI2 family. Component of the RMI complex, containing at least top-3, rmh-1 and rmh-2. Component of the BTR double Holliday Junction dissolution complex composed of at least him-6, top-3, rmh-1 and rmif-2, which is involved in double strand break repair in the germline. Interacts with rmh-1; the interaction is direct and is required for mutual stability and localization at nuclear foci. As to expression, expressed in the germline.

It is found in the nucleus. Its function is as follows. Essential component of the RMI complex, a complex that plays an important role in the processing of homologous recombination intermediates. Component of the BTR double Holliday Junction dissolution complex, which is involved in homologous recombination during meiotic double strand break in the germline. Plays a role in double strand break repair by positively regulating the accumulation of rad-51 at double strand breaks. Stabilizes and positively regulates the localization of the BTR double Holliday Junction dissolution complex components rmh-1, him-6 and top-3 at nuclear foci during meiotic recombination. Positively regulates meiotic recombination, chiasma formation, and chromosome segregation in meiosis. Positively regulates DNA crossover formation and positioning on chromosome arms (away from the chromosome center) during homologous recombination. In Caenorhabditis elegans, this protein is RecQ-mediated genome instability protein 2 homolog.